Here is a 1343-residue protein sequence, read N- to C-terminus: DNA-directed RNA polymerase subunit beta (1343 aa).

This sequence belongs to the RNA polymerase beta chain family. The RNAP catalytic core consists of 2 alpha, 1 beta, 1 beta' and 1 omega subunit. When a sigma factor is associated with the core the holoenzyme is formed, which can initiate transcription.

The enzyme catalyses RNA(n) + a ribonucleoside 5'-triphosphate = RNA(n+1) + diphosphate. DNA-dependent RNA polymerase catalyzes the transcription of DNA into RNA using the four ribonucleoside triphosphates as substrates. The sequence is that of DNA-directed RNA polymerase subunit beta from Shewanella woodyi (strain ATCC 51908 / MS32).